Here is a 428-residue protein sequence, read N- to C-terminus: Enolase (428 aa).

Q163 provides a ligand contact to (2R)-2-phosphoglycerate. E205 acts as the Proton donor in catalysis. Mg(2+) contacts are provided by D242, E285, and D312. K337, R366, S367, and K388 together coordinate (2R)-2-phosphoglycerate. The Proton acceptor role is filled by K337.

Belongs to the enolase family. Mg(2+) serves as cofactor.

The protein resides in the cytoplasm. It localises to the secreted. It is found in the cell surface. The enzyme catalyses (2R)-2-phosphoglycerate = phosphoenolpyruvate + H2O. The protein operates within carbohydrate degradation; glycolysis; pyruvate from D-glyceraldehyde 3-phosphate: step 4/5. Catalyzes the reversible conversion of 2-phosphoglycerate (2-PG) into phosphoenolpyruvate (PEP). It is essential for the degradation of carbohydrates via glycolysis. The polypeptide is Enolase (Neisseria meningitidis serogroup C (strain 053442)).